Reading from the N-terminus, the 609-residue chain is Proteasome-associated ATPase (609 aa).

Residues 1-27 (MGSSERSEAFGTPRESDMSSGDEAELE) form a disordered region. A coiled-coil region spans residues 17–96 (DMSSGDEAEL…LREEVDRLGQ (80 aa)). 296–301 (GCGKTL) is a binding site for ATP. Positions 608 to 609 (YL) are docks into pockets in the proteasome alpha-ring.

The protein belongs to the AAA ATPase family. Homohexamer. Assembles into a hexameric ring structure that caps the 20S proteasome core. Strongly interacts with the prokaryotic ubiquitin-like protein Pup through a hydrophobic interface; the interacting region of ARC lies in its N-terminal coiled-coil domain. There is one Pup binding site per ARC hexamer ring. Upon ATP-binding, the C-terminus of ARC interacts with the alpha-rings of the proteasome core, possibly by binding to the intersubunit pockets.

The protein operates within protein degradation; proteasomal Pup-dependent pathway. In terms of biological role, ATPase which is responsible for recognizing, binding, unfolding and translocation of pupylated proteins into the bacterial 20S proteasome core particle. May be essential for opening the gate of the 20S proteasome via an interaction with its C-terminus, thereby allowing substrate entry and access to the site of proteolysis. Thus, the C-termini of the proteasomal ATPase may function like a 'key in a lock' to induce gate opening and therefore regulate proteolysis. This chain is Proteasome-associated ATPase, found in Mycobacterium avium (strain 104).